We begin with the raw amino-acid sequence, 102 residues long: Protein translation factor SUI1 homolog (102 aa).

The protein belongs to the SUI1 family.

In Methanococcus maripaludis (strain C5 / ATCC BAA-1333), this protein is Protein translation factor SUI1 homolog.